The chain runs to 266 residues: MDSMNVPEVLEIKRIVEESESVKTFIFSWDFRREVRPGQFVMVWDFRDEKPMSVSLIDPVRSEIGISIRRVGEFTDRVHGLSEGDLLGIRGPYGRGFELMGRDILLVGGGIGMAPLAALADEATARGMRVDALVAARTADELLFLDRLEAAGVNISTCTDDGSCGFKGFAHERLLTLEENHDMAAVCGPEPMMFQVMRILDERDVPAQLSLERYMKCAVGICGQCCLDDTGFRVCAEGPVFWSQELSRVREFGRYRRDPAGRRVPW.

The FAD-binding FR-type domain occupies 5–99 (NVPEVLEIKR…RGPYGRGFEL (95 aa)). [2Fe-2S] cluster-binding residues include Cys217, Cys222, Cys225, and Cys235.

This sequence belongs to the PyrK family. Heterotetramer of 2 PyrK and 2 PyrD type B subunits. [2Fe-2S] cluster serves as cofactor. FAD is required as a cofactor.

It participates in pyrimidine metabolism; UMP biosynthesis via de novo pathway; orotate from (S)-dihydroorotate (NAD(+) route): step 1/1. In terms of biological role, responsible for channeling the electrons from the oxidation of dihydroorotate from the FMN redox center in the PyrD type B subunit to the ultimate electron acceptor NAD(+). The polypeptide is Probable dihydroorotate dehydrogenase B (NAD(+)), electron transfer subunit (Methanothermobacter thermautotrophicus (strain ATCC 29096 / DSM 1053 / JCM 10044 / NBRC 100330 / Delta H) (Methanobacterium thermoautotrophicum)).